The sequence spans 287 residues: Acetyl-coenzyme A carboxylase carboxyl transferase subunit beta (287 aa).

Residues 33 to 287 (LFSKCPGCKH…TLLAFHGGQA (255 aa)) enclose the CoA carboxyltransferase N-terminal domain. The Zn(2+) site is built by cysteine 37, cysteine 40, cysteine 55, and cysteine 58. The C4-type zinc-finger motif lies at 37–58 (CPGCKHTIYQKDLGNDSVCPNC).

This sequence belongs to the AccD/PCCB family. Acetyl-CoA carboxylase is a heterohexamer composed of biotin carboxyl carrier protein (AccB), biotin carboxylase (AccC) and two subunits each of ACCase subunit alpha (AccA) and ACCase subunit beta (AccD). Zn(2+) serves as cofactor.

Its subcellular location is the cytoplasm. The enzyme catalyses N(6)-carboxybiotinyl-L-lysyl-[protein] + acetyl-CoA = N(6)-biotinyl-L-lysyl-[protein] + malonyl-CoA. It functions in the pathway lipid metabolism; malonyl-CoA biosynthesis; malonyl-CoA from acetyl-CoA: step 1/1. Component of the acetyl coenzyme A carboxylase (ACC) complex. Biotin carboxylase (BC) catalyzes the carboxylation of biotin on its carrier protein (BCCP) and then the CO(2) group is transferred by the transcarboxylase to acetyl-CoA to form malonyl-CoA. This Streptococcus sanguinis (strain SK36) protein is Acetyl-coenzyme A carboxylase carboxyl transferase subunit beta.